The following is a 477-amino-acid chain: Ribulose bisphosphate carboxylase large chain (477 aa).

A propeptide spanning residues 1–2 (MS) is cleaved from the precursor. At Pro3 the chain carries N-acetylproline. Substrate is bound by residues Asn123 and Thr173. Lys175 acts as the Proton acceptor in catalysis. A substrate-binding site is contributed by Lys177. Lys201, Asp203, and Glu204 together coordinate Mg(2+). Lys201 is modified (N6-carboxylysine). Catalysis depends on His294, which acts as the Proton acceptor. Positions 295, 327, and 379 each coordinate substrate.

Belongs to the RuBisCO large chain family. Type I subfamily. Heterohexadecamer of 8 large chains and 8 small chains; disulfide-linked. The disulfide link is formed within the large subunit homodimers. Mg(2+) serves as cofactor. In terms of processing, the disulfide bond which can form in the large chain dimeric partners within the hexadecamer appears to be associated with oxidative stress and protein turnover.

Its subcellular location is the plastid. The protein resides in the chloroplast. It carries out the reaction 2 (2R)-3-phosphoglycerate + 2 H(+) = D-ribulose 1,5-bisphosphate + CO2 + H2O. The catalysed reaction is D-ribulose 1,5-bisphosphate + O2 = 2-phosphoglycolate + (2R)-3-phosphoglycerate + 2 H(+). Functionally, ruBisCO catalyzes two reactions: the carboxylation of D-ribulose 1,5-bisphosphate, the primary event in carbon dioxide fixation, as well as the oxidative fragmentation of the pentose substrate in the photorespiration process. Both reactions occur simultaneously and in competition at the same active site. In Avena sativa (Oat), this protein is Ribulose bisphosphate carboxylase large chain.